The sequence spans 201 residues: Small ribosomal subunit protein uS4 (201 aa).

The S4 RNA-binding domain occupies 91 to 155 (TRLDNVVYRA…STLPFQVARE (65 aa)).

It belongs to the universal ribosomal protein uS4 family. Part of the 30S ribosomal subunit. Contacts protein S5. The interaction surface between S4 and S5 is involved in control of translational fidelity.

In terms of biological role, one of the primary rRNA binding proteins, it binds directly to 16S rRNA where it nucleates assembly of the body of the 30S subunit. Its function is as follows. With S5 and S12 plays an important role in translational accuracy. The chain is Small ribosomal subunit protein uS4 from Nocardia farcinica (strain IFM 10152).